The following is a 557-amino-acid chain: Pectinesterase/pectinesterase inhibitor 18 (557 aa).

A signal peptide spans 1-34; the sequence is MSNSNQPLLSKPKSLKHKNLCLVLSFVAILGSVA. Positions 47-203 are pectinesterase inhibitor 18; sequence NNDDSLLTTS…VSRARVALAI (157 aa). A pectinesterase 18 region spans residues 246-543; that stretch reads NVVVAKDGTG…FTVAKLIQGG (298 aa). The substrate site is built by Thr-321 and Gln-351. The Proton donor; for pectinesterase activity role is filled by Asp-374. Asp-395 (nucleophile; for pectinesterase activity) is an active-site residue. The substrate site is built by Arg-463 and Trp-465.

It in the N-terminal section; belongs to the PMEI family. The protein in the C-terminal section; belongs to the pectinesterase family. Expressed in siliques, flowers, floral stems, rosette leaves and roots.

It localises to the secreted. Its subcellular location is the cell wall. It carries out the reaction [(1-&gt;4)-alpha-D-galacturonosyl methyl ester](n) + n H2O = [(1-&gt;4)-alpha-D-galacturonosyl](n) + n methanol + n H(+). It catalyses the reaction Endohydrolysis of the N-glycosidic bond at one specific adenosine on the 28S rRNA.. The protein operates within glycan metabolism; pectin degradation; 2-dehydro-3-deoxy-D-gluconate from pectin: step 1/5. In terms of biological role, acts in the modification of cell walls via demethylesterification of cell wall pectin. Inhibits the elongation phase of protein synthesis. The polypeptide is Pectinesterase/pectinesterase inhibitor 18 (PME18) (Arabidopsis thaliana (Mouse-ear cress)).